We begin with the raw amino-acid sequence, 116 residues long: Thioredoxin H-type (116 aa).

The Thioredoxin domain maps to 2 to 115 (AEEAQVIACH…HKIAVHAPIT (114 aa)). Residues Cys-39 and Cys-42 each act as nucleophile in the active site. The cysteines at positions 39 and 42 are disulfide-linked.

This sequence belongs to the thioredoxin family. Plant H-type subfamily.

The protein localises to the cytoplasm. In terms of biological role, participates in various redox reactions through the reversible oxidation of the active center dithiol to a disulfide. The H form is known to activate a number of cytosolic enzymes. The polypeptide is Thioredoxin H-type (Fagopyrum esculentum (Common buckwheat)).